The following is a 98-amino-acid chain: MPSISTNITLAFTIALTGMLVFRSHLMSSLLCLEGMMLAMFILSILFIMNLHYTVSFIMPILLLVLAACEAAIGLALLVMVSNTYGLDHIQNLNLLQC.

Helical transmembrane passes span 2-22 (PSISTNITLAFTIALTGMLVF), 29-49 (SLLCLEGMMLAMFILSILFIM), and 61-81 (ILLLVLAACEAAIGLALLVMV).

Belongs to the complex I subunit 4L family. Core subunit of respiratory chain NADH dehydrogenase (Complex I) which is composed of 45 different subunits.

It is found in the mitochondrion inner membrane. The enzyme catalyses a ubiquinone + NADH + 5 H(+)(in) = a ubiquinol + NAD(+) + 4 H(+)(out). Functionally, core subunit of the mitochondrial membrane respiratory chain NADH dehydrogenase (Complex I) which catalyzes electron transfer from NADH through the respiratory chain, using ubiquinone as an electron acceptor. Part of the enzyme membrane arm which is embedded in the lipid bilayer and involved in proton translocation. This Lepilemur sahamalazensis (Sahamalaza sportive lemur) protein is NADH-ubiquinone oxidoreductase chain 4L (MT-ND4L).